A 266-amino-acid chain; its full sequence is Hydroxyethylthiazole kinase (266 aa).

M41 serves as a coordination point for substrate. ATP is bound by residues R117 and S163. A190 contacts substrate.

This sequence belongs to the Thz kinase family. Requires Mg(2+) as cofactor.

It catalyses the reaction 5-(2-hydroxyethyl)-4-methylthiazole + ATP = 4-methyl-5-(2-phosphooxyethyl)-thiazole + ADP + H(+). It functions in the pathway cofactor biosynthesis; thiamine diphosphate biosynthesis; 4-methyl-5-(2-phosphoethyl)-thiazole from 5-(2-hydroxyethyl)-4-methylthiazole: step 1/1. Functionally, catalyzes the phosphorylation of the hydroxyl group of 4-methyl-5-beta-hydroxyethylthiazole (THZ). This chain is Hydroxyethylthiazole kinase, found in Histophilus somni (strain 129Pt) (Haemophilus somnus).